The sequence spans 278 residues: Release factor glutamine methyltransferase (278 aa).

S-adenosyl-L-methionine is bound by residues 117 to 121 (GTGSG), Asp140, and Asn184. 184–187 (NPPY) contributes to the substrate binding site.

It belongs to the protein N5-glutamine methyltransferase family. PrmC subfamily.

It carries out the reaction L-glutaminyl-[peptide chain release factor] + S-adenosyl-L-methionine = N(5)-methyl-L-glutaminyl-[peptide chain release factor] + S-adenosyl-L-homocysteine + H(+). Functionally, methylates the class 1 translation termination release factors RF1/PrfA and RF2/PrfB on the glutamine residue of the universally conserved GGQ motif. This Bacteroides thetaiotaomicron (strain ATCC 29148 / DSM 2079 / JCM 5827 / CCUG 10774 / NCTC 10582 / VPI-5482 / E50) protein is Release factor glutamine methyltransferase.